Reading from the N-terminus, the 333-residue chain is Abequosyltransferase RfbV (333 aa).

It belongs to the glycosyltransferase 2 family.

The enzyme catalyses CDP-alpha-D-abequose + alpha-D-Man-(1-&gt;4)-alpha-L-Rha-(1-&gt;3)-alpha-D-Gal-di-trans,octa-cis-undecaprenyl diphosphate = alpha-D-Abe-(1-&gt;3)-alpha-D-Man-(1-&gt;4)-alpha-L-Rha-(1-&gt;3)-alpha-D-Gal-di-trans,octa-cis-undecaprenyl diphosphate + CDP + H(+). It functions in the pathway bacterial outer membrane biogenesis; LPS O-antigen biosynthesis. In terms of biological role, catalyzes the transfer of CDP-abequose on D-mannosyl-L-rhamnosyl-D-galactose-1-diphospholipid to yield D-abequosyl-D-mannosyl-rhamnosyl-D-galactose-1-diphospholipid. This is Abequosyltransferase RfbV (rfbV) from Salmonella typhimurium (strain LT2 / SGSC1412 / ATCC 700720).